A 132-amino-acid chain; its full sequence is Small ribosomal subunit protein uS11 (132 aa).

This sequence belongs to the universal ribosomal protein uS11 family. Part of the 30S ribosomal subunit. Interacts with proteins S7 and S18. Binds to IF-3.

Its function is as follows. Located on the platform of the 30S subunit, it bridges several disparate RNA helices of the 16S rRNA. Forms part of the Shine-Dalgarno cleft in the 70S ribosome. This is Small ribosomal subunit protein uS11 from Legionella pneumophila (strain Paris).